Here is a 376-residue protein sequence, read N- to C-terminus: Queuine tRNA-ribosyltransferase (376 aa).

Aspartate 89 acts as the Proton acceptor in catalysis. Residues 89 to 93, aspartate 143, glutamine 194, and glycine 221 each bind substrate; that span reads DSGGF. Residues 252–258 form an RNA binding region; that stretch reads GVGIPSN. Aspartate 271 (nucleophile) is an active-site residue. Residues 276 to 280 form an RNA binding; important for wobble base 34 recognition region; it reads ARNGR. Positions 309, 311, 314, and 340 each coordinate Zn(2+).

Belongs to the queuine tRNA-ribosyltransferase family. Homodimer. Within each dimer, one monomer is responsible for RNA recognition and catalysis, while the other monomer binds to the replacement base PreQ1. Zn(2+) is required as a cofactor.

It catalyses the reaction 7-aminomethyl-7-carbaguanine + guanosine(34) in tRNA = 7-aminomethyl-7-carbaguanosine(34) in tRNA + guanine. It functions in the pathway tRNA modification; tRNA-queuosine biosynthesis. Catalyzes the base-exchange of a guanine (G) residue with the queuine precursor 7-aminomethyl-7-deazaguanine (PreQ1) at position 34 (anticodon wobble position) in tRNAs with GU(N) anticodons (tRNA-Asp, -Asn, -His and -Tyr). Catalysis occurs through a double-displacement mechanism. The nucleophile active site attacks the C1' of nucleotide 34 to detach the guanine base from the RNA, forming a covalent enzyme-RNA intermediate. The proton acceptor active site deprotonates the incoming PreQ1, allowing a nucleophilic attack on the C1' of the ribose to form the product. After dissociation, two additional enzymatic reactions on the tRNA convert PreQ1 to queuine (Q), resulting in the hypermodified nucleoside queuosine (7-(((4,5-cis-dihydroxy-2-cyclopenten-1-yl)amino)methyl)-7-deazaguanosine). In Clostridium botulinum (strain Okra / Type B1), this protein is Queuine tRNA-ribosyltransferase.